A 419-amino-acid polypeptide reads, in one-letter code: UDP-N-acetylglucosamine 1-carboxyvinyltransferase (419 aa).

Lys-22–Asn-23 provides a ligand contact to phosphoenolpyruvate. Arg-95 lines the UDP-N-acetyl-alpha-D-glucosamine pocket. Cys-119 acts as the Proton donor in catalysis. Cys-119 carries the 2-(S-cysteinyl)pyruvic acid O-phosphothioketal modification. Residues Lys-164–Val-167, Asp-308, and Ile-330 each bind UDP-N-acetyl-alpha-D-glucosamine.

Belongs to the EPSP synthase family. MurA subfamily.

The protein resides in the cytoplasm. It catalyses the reaction phosphoenolpyruvate + UDP-N-acetyl-alpha-D-glucosamine = UDP-N-acetyl-3-O-(1-carboxyvinyl)-alpha-D-glucosamine + phosphate. It participates in cell wall biogenesis; peptidoglycan biosynthesis. Cell wall formation. Adds enolpyruvyl to UDP-N-acetylglucosamine. This chain is UDP-N-acetylglucosamine 1-carboxyvinyltransferase, found in Rickettsia prowazekii (strain Madrid E).